The primary structure comprises 140 residues: Profilin (140 aa).

It belongs to the profilin family. In terms of assembly, occurs in many kinds of cells as a complex with monomeric actin in a 1:1 ratio.

In terms of biological role, binds to actin and affects the structure of the cytoskeleton. At high concentrations, profilin prevents the polymerization of actin, whereas it enhances it at low concentrations. By binding to PIP2, it inhibits the formation of IP3 and DG. The polypeptide is Profilin (Suberites domuncula (Sponge)).